A 198-amino-acid polypeptide reads, in one-letter code: NAD(P)H dehydrogenase (quinone) (198 aa).

The 186-residue stretch at 4 to 189 folds into the Flavodoxin-like domain; sequence VLVLYYSMYG…SIARYQGEYV (186 aa). Residues 10-15 and 78-80 contribute to the FMN site; these read SMYGHI and TRF. Y12 is a binding site for NAD(+). Residue W98 coordinates substrate. Residues 113 to 118 and H133 contribute to the FMN site; that span reads STGTGG.

The protein belongs to the WrbA family. FMN serves as cofactor.

It carries out the reaction a quinone + NADH + H(+) = a quinol + NAD(+). It catalyses the reaction a quinone + NADPH + H(+) = a quinol + NADP(+). In Escherichia coli O157:H7, this protein is NAD(P)H dehydrogenase (quinone).